The chain runs to 875 residues: Phosphoenolpyruvate carboxylase (875 aa).

Active-site residues include His-137 and Lys-542.

It belongs to the PEPCase type 1 family. Mg(2+) serves as cofactor.

The enzyme catalyses oxaloacetate + phosphate = phosphoenolpyruvate + hydrogencarbonate. Functionally, forms oxaloacetate, a four-carbon dicarboxylic acid source for the tricarboxylic acid cycle. The protein is Phosphoenolpyruvate carboxylase of Pseudomonas putida (strain GB-1).